The chain runs to 245 residues: tRNA pseudouridine synthase A (245 aa).

Asp-52 serves as the catalytic Nucleophile. Tyr-111 serves as a coordination point for substrate.

The protein belongs to the tRNA pseudouridine synthase TruA family. In terms of assembly, homodimer.

It catalyses the reaction uridine(38/39/40) in tRNA = pseudouridine(38/39/40) in tRNA. Its function is as follows. Formation of pseudouridine at positions 38, 39 and 40 in the anticodon stem and loop of transfer RNAs. The protein is tRNA pseudouridine synthase A of Thermotoga neapolitana (strain ATCC 49049 / DSM 4359 / NBRC 107923 / NS-E).